We begin with the raw amino-acid sequence, 164 residues long: MTPVRLGILTAVIALALDQATKLWLLYGFELARKGVVPVTSFFDLVLAWNTGISYGWFAGQGPTGQILMLAFKAVAIVALAIWMARSTTKLATIGLGLIIGGAIGNAIDRLAYGAVVDFALFHVEIAGKTYNWYVFNIADVAIVVGVVALLYDSLIGAPAVKAP.

4 consecutive transmembrane segments (helical) span residues 6 to 26, 39 to 59, 65 to 85, and 88 to 108; these read LGILTAVIALALDQATKLWLL, VTSFFDLVLAWNTGISYGWFA, GQILMLAFKAVAIVALAIWMA, and TTKLATIGLGLIIGGAIGNAI. Residues D118 and D140 contribute to the active site. The chain crosses the membrane as a helical span at residues 141–161; sequence VAIVVGVVALLYDSLIGAPAV.

Belongs to the peptidase A8 family.

Its subcellular location is the cell inner membrane. The catalysed reaction is Release of signal peptides from bacterial membrane prolipoproteins. Hydrolyzes -Xaa-Yaa-Zaa-|-(S,diacylglyceryl)Cys-, in which Xaa is hydrophobic (preferably Leu), and Yaa (Ala or Ser) and Zaa (Gly or Ala) have small, neutral side chains.. The protein operates within protein modification; lipoprotein biosynthesis (signal peptide cleavage). Functionally, this protein specifically catalyzes the removal of signal peptides from prolipoproteins. The chain is Lipoprotein signal peptidase from Rhodopseudomonas palustris (strain TIE-1).